Here is a 200-residue protein sequence, read N- to C-terminus: Methylthioribulose-1-phosphate dehydratase-like protein (200 aa).

This sequence belongs to the aldolase class II family. MtnB subfamily.

In Schizosaccharomyces pombe (strain 972 / ATCC 24843) (Fission yeast), this protein is Methylthioribulose-1-phosphate dehydratase-like protein.